The following is a 459-amino-acid chain: MDQSARYADLSLKEEDLIAGGKHILVAYKMKPKAGHGYLEASAHFAAESSTGTNVEVSTTDDFTKGVDALVYYIDEATEDMRIAYPMDLFDRNVTDGRMMLVSVLTLIIGNNQGMGDIEHAKIHDIYFPERAIQLFDGPSKDISDMWRILGRPIENGGYIAGTIIKPKLGLRPEPFAAAAYQFWLGGDFIKNDEPQGNQVFCPLKKVLPLVYDSMKRAQDETGQAKLFSMNITADDHYEMMARADFGLETFGPDADKLAFLVDGFVGGPGMITTARRQYPNQYLHYHRAGHGMITSPSAKRGYTAFVLAKISRLQGASGIHVGTMGYGKMEGEGDDRNIAYMIERDEAQGPVYFQKWYGMKPTTPIISGGMNALRLPGFFENLGHGNVINTAGGGSYGHIDSPAAGAISLKQAYECWKAGADPIEFAKEHKEFARAFESFPKDADAIFPGWREKLGVHK.

Asn111 contributes to the substrate binding site. The active-site Proton acceptor is Lys166. Substrate is bound at residue Lys168. The Mg(2+) site is built by Lys191, Asp193, and Glu194. At Lys191 the chain carries N6-carboxylysine. The Proton acceptor role is filled by His287. Residues Arg288, His321, and Ser368 each coordinate substrate.

Belongs to the RuBisCO large chain family. Type II subfamily. In terms of assembly, homodimer. It depends on Mg(2+) as a cofactor.

The protein localises to the cytoplasm. It catalyses the reaction 2 (2R)-3-phosphoglycerate + 2 H(+) = D-ribulose 1,5-bisphosphate + CO2 + H2O. The enzyme catalyses D-ribulose 1,5-bisphosphate + O2 = 2-phosphoglycolate + (2R)-3-phosphoglycerate + 2 H(+). In terms of biological role, ruBisCO catalyzes two reactions: the carboxylation of D-ribulose 1,5-bisphosphate, the primary event in carbon dioxide fixation, as well as the oxidative fragmentation of the pentose substrate. Both reactions occur simultaneously and in competition at the same active site. The polypeptide is Ribulose bisphosphate carboxylase (Halothiobacillus neapolitanus (strain ATCC 23641 / c2) (Thiobacillus neapolitanus)).